The sequence spans 327 residues: DNA-directed RNA polymerase subunit alpha (327 aa).

Positions 1–233 (MVREKVKVST…NLFIPFLHVE (233 aa)) are alpha N-terminal domain (alpha-NTD). An alpha C-terminal domain (alpha-CTD) region spans residues 267–327 (LAFQYIFIDQ…KKILDILEKK (61 aa)).

Belongs to the RNA polymerase alpha chain family. As to quaternary structure, in plastids the minimal PEP RNA polymerase catalytic core is composed of four subunits: alpha, beta, beta', and beta''. When a (nuclear-encoded) sigma factor is associated with the core the holoenzyme is formed, which can initiate transcription.

It is found in the plastid. The protein localises to the chloroplast. The catalysed reaction is RNA(n) + a ribonucleoside 5'-triphosphate = RNA(n+1) + diphosphate. DNA-dependent RNA polymerase catalyzes the transcription of DNA into RNA using the four ribonucleoside triphosphates as substrates. In Draba nemorosa (Woodland whitlowgrass), this protein is DNA-directed RNA polymerase subunit alpha.